Here is a 375-residue protein sequence, read N- to C-terminus: Sulfite efflux pump SSU1 (375 aa).

The Cytoplasmic portion of the chain corresponds to 1–25 (MPSGSGFHNIEEAGEKARKRDDWIA). The helical transmembrane segment at 26–46 (ISNFHPGWFSVNMGTGITAIL) threads the bilayer. At 47-59 (LQNLPYQFPGLHY) the chain is on the extracellular side. A helical membrane pass occupies residues 60-80 (IAVVLFILNVIIFFLFLTISI). Residues 81–101 (TRYCLWPDKFKAMLAHPAHSM) lie on the Cytoplasmic side of the membrane. Residues 102–122 (LLGTFPMGFATIINCIVFICV) form a helical membrane-spanning segment. Residues 123–135 (PVWGEWASRFAWG) lie on the Extracellular side of the membrane. The chain crosses the membrane as a helical span at residues 136 to 156 (LWWIDAAVSVAICYFVPFMLM). Residues 157-167 (TKHTSSLETMT) lie on the Cytoplasmic side of the membrane. Residues 168–188 (AAWLLPIVAPVVAAASGGVVA) traverse the membrane as a helical segment. The Extracellular segment spans residues 189-200 (DSLQNDTHALIT). N-linked (GlcNAc...) asparagine glycosylation occurs at Asn-193. The chain crosses the membrane as a helical span at residues 201–221 (ILVCYAMWGSAVPLAMVILVI). The Cytoplasmic segment spans residues 222–234 (YFQRLAIHKLVPR). A helical membrane pass occupies residues 235-255 (AAIVSALLPIGPLGQGGFGLM). Residues 256-277 (QLGVVAKRVFPRLDFLAPIAGD) lie on the Extracellular side of the membrane. A helical membrane pass occupies residues 278 to 298 (IFYVMGAFIAMIMWGFGLIWL). Residues 299–309 (WFALASFTRGK) lie on the Cytoplasmic side of the membrane. A helical membrane pass occupies residues 310–330 (FYFNIGWWAFTFPLGVFTTAT). Topologically, residues 331-343 (TQMGKEFNSPFFD) are extracellular. The helical transmembrane segment at 344-364 (ILGTFFSIVVTCMWVLVFALT) threads the bilayer. Residues 365–375 (VYKSCTKELFR) lie on the Cytoplasmic side of the membrane.

This sequence belongs to the tellurite-resistance/dicarboxylate transporter (TDT) family.

It localises to the cell membrane. Sulphite efflux pump required for the secretion of sulphite as a reducing agent. In the presence of sulphite, cystine in keratin is directly cleaved to cysteine and S-sulphocysteine, and thereby, reduced proteins become accessible to hydrolysis by a variety of secreted endo- and exoproteases. Excretion of sulphite mediated by an efflux pump also represents a detoxification pathway for dermatophytes during infection of the epidermal stratum corneum, hair and nails, which are rich in cysteine. This is Sulfite efflux pump SSU1 (SSU1) from Trichophyton rubrum (Athlete's foot fungus).